Consider the following 321-residue polypeptide: Glucokinase (321 aa).

9-14 (ADIGGT) is a binding site for ATP.

The protein belongs to the bacterial glucokinase family.

Its subcellular location is the cytoplasm. It catalyses the reaction D-glucose + ATP = D-glucose 6-phosphate + ADP + H(+). The protein is Glucokinase of Saccharophagus degradans (strain 2-40 / ATCC 43961 / DSM 17024).